The chain runs to 74 residues: uncharacterized protein (74 aa).

The tract at residues 39 to 74 (SSPQAPGTLKPRALVRPSPGPVQENHLSEAQFPPKL) is disordered.

This is an uncharacterized protein from Homo sapiens (Human).